A 197-amino-acid polypeptide reads, in one-letter code: Protein GrpE (197 aa).

Residues 1–40 are disordered; it reads MSSKEQKTPEGQAPEEIIMDRHEEIEAVEPEASAEQVDPR.

The protein belongs to the GrpE family. In terms of assembly, homodimer.

It is found in the cytoplasm. In terms of biological role, participates actively in the response to hyperosmotic and heat shock by preventing the aggregation of stress-denatured proteins, in association with DnaK and GrpE. It is the nucleotide exchange factor for DnaK and may function as a thermosensor. Unfolded proteins bind initially to DnaJ; upon interaction with the DnaJ-bound protein, DnaK hydrolyzes its bound ATP, resulting in the formation of a stable complex. GrpE releases ADP from DnaK; ATP binding to DnaK triggers the release of the substrate protein, thus completing the reaction cycle. Several rounds of ATP-dependent interactions between DnaJ, DnaK and GrpE are required for fully efficient folding. This Shigella flexneri serotype 5b (strain 8401) protein is Protein GrpE.